We begin with the raw amino-acid sequence, 221 residues long: D-glycero-alpha-D-manno-heptose 1-phosphate guanylyltransferase (221 aa).

The protein belongs to the D-alpha-D-heptose-1-P guanylyltransferase family.

It catalyses the reaction D-glycero-alpha-D-manno-heptose 1-phosphate + GTP + H(+) = GDP-D-glycero-alpha-D-manno-heptose + diphosphate. It participates in nucleotide-sugar biosynthesis; GDP-D-glycero-alpha-D-manno-heptose biosynthesis; GDP-D-glycero-alpha-D-manno-heptose from D-glycero-alpha-D-manno-heptose 7-phosphate: step 3/3. The protein operates within capsule biogenesis; capsule polysaccharide biosynthesis. In terms of biological role, catalyzes the GDP transfer from GTP to D-glycero-alpha-D-manno-heptose 1-phosphate, yielding GDP-D-alpha-D-heptose. Is able to use ATP, CTP or UTP as substrate in the presence of pyrophosphatase, but at a significantly slower rate. Can also form GDP-alpha-D-mannose from alpha-D-mannose 1-phosphate and GTP. This Campylobacter jejuni subsp. jejuni serotype O:2 (strain ATCC 700819 / NCTC 11168) protein is D-glycero-alpha-D-manno-heptose 1-phosphate guanylyltransferase.